Consider the following 209-residue polypeptide: ATP-dependent Clp protease proteolytic subunit (209 aa).

Serine 101 acts as the Nucleophile in catalysis. Residue histidine 126 is part of the active site.

Belongs to the peptidase S14 family. As to quaternary structure, component of the chloroplastic Clp protease core complex.

Its subcellular location is the plastid. It localises to the chloroplast stroma. It catalyses the reaction Hydrolysis of proteins to small peptides in the presence of ATP and magnesium. alpha-casein is the usual test substrate. In the absence of ATP, only oligopeptides shorter than five residues are hydrolyzed (such as succinyl-Leu-Tyr-|-NHMec, and Leu-Tyr-Leu-|-Tyr-Trp, in which cleavage of the -Tyr-|-Leu- and -Tyr-|-Trp bonds also occurs).. Functionally, cleaves peptides in various proteins in a process that requires ATP hydrolysis. Has a chymotrypsin-like activity. Plays a major role in the degradation of misfolded proteins. This Huperzia lucidula (Shining clubmoss) protein is ATP-dependent Clp protease proteolytic subunit.